The sequence spans 267 residues: Small ribosomal subunit protein uS10m (267 aa).

A mitochondrion-targeting transit peptide spans 1–10 (MLSRILGVRN).

Belongs to the universal ribosomal protein uS10 family. Part of the mitochondrial small ribosomal subunit.

The protein resides in the mitochondrion. In terms of biological role, involved in mitochondrial genome encoded proteins translation. Involved in the binding of tRNA to the ribosomes. The polypeptide is Small ribosomal subunit protein uS10m (RSM10) (Debaryomyces hansenii (strain ATCC 36239 / CBS 767 / BCRC 21394 / JCM 1990 / NBRC 0083 / IGC 2968) (Yeast)).